Reading from the N-terminus, the 250-residue chain is Uracil-DNA glycosylase (250 aa).

Residue aspartate 78 is the Proton acceptor of the active site. Positions 228 to 250 (RGQKPVDWSGEQNNASRQGEFAL) are disordered.

It belongs to the uracil-DNA glycosylase (UDG) superfamily. UNG family.

It localises to the cytoplasm. It catalyses the reaction Hydrolyzes single-stranded DNA or mismatched double-stranded DNA and polynucleotides, releasing free uracil.. Its function is as follows. Excises uracil residues from the DNA which can arise as a result of misincorporation of dUMP residues by DNA polymerase or due to deamination of cytosine. In Bordetella parapertussis (strain 12822 / ATCC BAA-587 / NCTC 13253), this protein is Uracil-DNA glycosylase.